The chain runs to 382 residues: MRMESLADRLDACQEKLLDLYEKDSNKLEDQILHWHYVRLENAMLFKARQAGLTRVGHQMVPTLSVTKGKAHKAIEVHLSLQGLQTSAYAHEPWTLQTTSLEMWNTQPQRCWKKKGRRLTVKFDGEDHKAVEYVSWGYIYVQSTETDLWYKVPGKVSYKGLYYEMEGQEHYYVTFAQEAQKYGETGKWEVHMGNTVIYEPCASVSSTQDAVREVSTAETAGHLRDNTTQTTTTPTCVGPTQTSTSVQTPPHKRQRLHRDREQQPDTTQKDNHKRVDSTDQWINGHRNSTETGDNCDSYSSPVIHLKGDPNKLKCFRYRLQHSVPELFDKASSTWHWAGGQSTTRAAFVTLWYVNVEQRKQFLNRVTIPKGIQATAGYMSMCI.

A transactivation domain region spans residues 1-204 (MRMESLADRL…TVIYEPCASV (204 aa)). The segment at 213–294 (EVSTAETAGH…HRNSTETGDN (82 aa)) is disordered. Over residues 227-249 (TTQTTTTPTCVGPTQTSTSVQTP) the composition is skewed to low complexity. The span at 258 to 277 (RDREQQPDTTQKDNHKRVDS) shows a compositional bias: basic and acidic residues. Residues 278-294 (TDQWINGHRNSTETGDN) show a composition bias toward polar residues. A DNA-binding domain region spans residues 299-382 (SSPVIHLKGD…ATAGYMSMCI (84 aa)). Lys-306 is covalently cross-linked (Glycyl lysine isopeptide (Lys-Gly) (interchain with G-Cter in SUMO)).

This sequence belongs to the papillomaviridae E2 protein family. Binds DNA as homodimer. Interacts with protein E1; this interaction greatly increases E1 DNA-binding activity. Interacts with protein L1; this interaction enhances E2-dependent replication and transcription activation. Interacts with protein L2; this interaction inhibits E2 transcriptional activity but not DNA replication function E2. Interacts with protein E7; this interaction inhibits E7 oncogenic activity. Interacts with host TAF1; this interaction modulates E2-dependent transcriptional regulation. Interacts with host BRD4; this interaction mediates E2 transcriptional activation function. Additionally, the interaction with host BRD4 on mitotic chromosomes mediates tethering of the viral genome. Interacts with host TOPBP1; this interaction is required for optimal viral DNA replication. Phosphorylated. Post-translationally, sumoylation plays a regulatory role in E2 transcriptional activity.

The protein localises to the host nucleus. Plays a role in the initiation of viral DNA replication. A dimer of E2 interacts with a dimer of E1 in order to improve specificity of E1 DNA binding activity. Once the complex recognizes and binds DNA at specific sites, the E2 dimer is removed from DNA. E2 also regulates viral transcription through binding to the E2RE response element (5'-ACCNNNNNNGGT-3') present in multiple copies in the regulatory regions of the viral genome. Activates or represses transcription depending on E2RE's position with regards to proximal promoter elements including the TATA-box. Repression occurs by sterically hindering the assembly of the transcription initiation complex. The sequence is that of Regulatory protein E2 from Human papillomavirus type 61.